The primary structure comprises 493 residues: GTPase Der (493 aa).

Positions Pro3 to Asn166 constitute an EngA-type G 1 domain. GTP is bound by residues Gly9 to Ser16, Asp56 to Ile60, and Asn118 to Asp121. The span at Val167–Glu184 shows a compositional bias: acidic residues. The segment at Val167–Lys195 is disordered. The region spanning Ile198–Val371 is the EngA-type G 2 domain. GTP contacts are provided by residues Gly204–Ser211, Asp251–Val255, and Asn316–Asp319. The KH-like domain occupies Thr372–Glu456. The span at Gly454 to Lys463 shows a compositional bias: basic and acidic residues. The tract at residues Gly454–Arg493 is disordered. Over residues Val471–Arg493 the composition is skewed to basic residues.

Belongs to the TRAFAC class TrmE-Era-EngA-EngB-Septin-like GTPase superfamily. EngA (Der) GTPase family. Associates with the 50S ribosomal subunit.

Its function is as follows. GTPase that plays an essential role in the late steps of ribosome biogenesis. The sequence is that of GTPase Der from Pseudomonas aeruginosa (strain LESB58).